A 437-amino-acid polypeptide reads, in one-letter code: Methionine aminopeptidase 2 (437 aa).

A disordered region spans residues methionine 1–glycine 90. Over residues glutamate 10–lysine 20 the composition is skewed to basic and acidic residues. The span at serine 31–glutamate 42 shows a compositional bias: acidic residues. Positions alanine 52–alanine 66 are enriched in basic residues. Histidine 190 lines the substrate pocket. The a divalent metal cation site is built by aspartate 210, aspartate 221, and histidine 290. Histidine 298 contributes to the substrate binding site. A divalent metal cation-binding residues include glutamate 323 and glutamate 418.

It belongs to the peptidase M24A family. Methionine aminopeptidase eukaryotic type 2 subfamily. The cofactor is Co(2+). It depends on Zn(2+) as a cofactor. Mn(2+) is required as a cofactor. Requires Fe(2+) as cofactor.

Its subcellular location is the cytoplasm. It catalyses the reaction Release of N-terminal amino acids, preferentially methionine, from peptides and arylamides.. Functionally, cotranslationally removes the N-terminal methionine from nascent proteins. The N-terminal methionine is often cleaved when the second residue in the primary sequence is small and uncharged (Met-Ala-, Cys, Gly, Pro, Ser, Thr, or Val). The chain is Methionine aminopeptidase 2 from Neurospora crassa (strain ATCC 24698 / 74-OR23-1A / CBS 708.71 / DSM 1257 / FGSC 987).